We begin with the raw amino-acid sequence, 139 residues long: ATP synthase epsilon chain (139 aa).

This sequence belongs to the ATPase epsilon chain family. As to quaternary structure, F-type ATPases have 2 components, CF(1) - the catalytic core - and CF(0) - the membrane proton channel. CF(1) has five subunits: alpha(3), beta(3), gamma(1), delta(1), epsilon(1). CF(0) has three main subunits: a, b and c.

The protein resides in the cell inner membrane. Its function is as follows. Produces ATP from ADP in the presence of a proton gradient across the membrane. The chain is ATP synthase epsilon chain (atpC) from Escherichia coli O157:H7.